The primary structure comprises 657 residues: MGEFKIQSRFKPTGDQPQAIDKLVNSIKSNNRAQTLLGVTGSGKTFTMANVIEKLQRPTIILAHNKTLAAQLCSEFKEFFPDNIVEYFVSYYDYYQPEAYVPQTDTFIEKDASINDEIDKLRHSATSALFERRDVIIVASVSCIYGLGNPDEYKKLTISLRTGMEKERDEVIKKLIEIQYERNDIDFSRGTFRVRGDSLDIIPASYSNKGIRIEFFGDEIDRIREFDVLTGSILGERNHVAITPASHFATSRETVDKAIGIIEGELEERLRELNAQDKLLEAQRLRQRTNFDIEMIKEMGYCSGIENYSRILDGRASGTPPKTLIDYFPEDFLMFIDESHVTLPQVRAMYAGDRSRKNTLVDYGFRLPCAYDNRPLKFEEFEKKINQVVFVSATPSAYEIDNSEEIAEQIIRPTGLLDPEIIIRPIKGQIDDLYGEINKTIECGFRILITTLTKRMSEDLTKYLIELGVKTTYMHSDIDTIERMKIIRDLRLGEYDVLVGINLLREGLDIPEVALVAILDADKEGFLRSETSLIQTIGRAARNSESKVIMYADNITKSMDKAMKETERRRAIQKDYNERHGIVPTTIIKDVRDIIEATKVAEEVEEYKAADKKKLTKKEKDKLIKDLTEEMLLAAKNLQFERAAELRDIINEIKDGK.

Residues 25–182 form the Helicase ATP-binding domain; that stretch reads NSIKSNNRAQ…KKLIEIQYER (158 aa). ATP is bound at residue 38-45; the sequence is GVTGSGKT. The Beta-hairpin motif lies at 91–114; sequence YYDYYQPEAYVPQTDTFIEKDASI. A Helicase C-terminal domain is found at 429–595; the sequence is QIDDLYGEIN…TIIKDVRDII (167 aa). The UVR domain occupies 621–656; sequence DKLIKDLTEEMLLAAKNLQFERAAELRDIINEIKDG.

Belongs to the UvrB family. Forms a heterotetramer with UvrA during the search for lesions. Interacts with UvrC in an incision complex.

It localises to the cytoplasm. In terms of biological role, the UvrABC repair system catalyzes the recognition and processing of DNA lesions. A damage recognition complex composed of 2 UvrA and 2 UvrB subunits scans DNA for abnormalities. Upon binding of the UvrA(2)B(2) complex to a putative damaged site, the DNA wraps around one UvrB monomer. DNA wrap is dependent on ATP binding by UvrB and probably causes local melting of the DNA helix, facilitating insertion of UvrB beta-hairpin between the DNA strands. Then UvrB probes one DNA strand for the presence of a lesion. If a lesion is found the UvrA subunits dissociate and the UvrB-DNA preincision complex is formed. This complex is subsequently bound by UvrC and the second UvrB is released. If no lesion is found, the DNA wraps around the other UvrB subunit that will check the other stand for damage. In Clostridium beijerinckii (strain ATCC 51743 / NCIMB 8052) (Clostridium acetobutylicum), this protein is UvrABC system protein B.